The primary structure comprises 809 residues: Lon protease (809 aa).

In terms of domain architecture, Lon N-terminal spans 8-203 (LPVVALRNMA…RLCLILADEI (196 aa)). 354 to 361 (GPPGTGKT) serves as a coordination point for ATP. A Lon proteolytic domain is found at 629–809 (KDEVGIVCGL…MDEVLKHALV (181 aa)). Catalysis depends on residues Ser716 and Lys759.

It belongs to the peptidase S16 family. As to quaternary structure, homohexamer. Organized in a ring with a central cavity.

The protein localises to the cytoplasm. The catalysed reaction is Hydrolysis of proteins in presence of ATP.. ATP-dependent serine protease that mediates the selective degradation of mutant and abnormal proteins as well as certain short-lived regulatory proteins. Required for cellular homeostasis and for survival from DNA damage and developmental changes induced by stress. Degrades polypeptides processively to yield small peptide fragments that are 5 to 10 amino acids long. Binds to DNA in a double-stranded, site-specific manner. The protein is Lon protease of Lachnoclostridium phytofermentans (strain ATCC 700394 / DSM 18823 / ISDg) (Clostridium phytofermentans).